A 310-amino-acid polypeptide reads, in one-letter code: Polyprenyl transferase ntnF (310 aa).

8 helical membrane passes run 30 to 50 (HTPE…FYAI), 63 to 83 (FLGI…WNDI), 110 to 130 (AMVA…AMLG), 154 to 174 (IWAP…PPWV), 185 to 205 (LPAS…LIYA), 230 to 250 (ACLT…AFEA), 255 to 275 (FLWV…ILSL), and 286 to 306 (IFLV…TDVW).

It belongs to the UbiA prenyltransferase family. Mg(2+) is required as a cofactor.

The protein resides in the membrane. It participates in secondary metabolite biosynthesis; terpenoid biosynthesis. Functionally, olyprenyl transferase; part of the gene cluster that mediates the biosynthesis of the meroterpenoids nectripenoids A and B, as well as cochliquninone D and isocochliquninone E. The pathway probably begins with the HR-PKS ntnH that catalyzes two chain-extension steps to form a reduced triketide, which then primes the SAT domain in the NR-PKS ntnG to initiate three more cycles of extension to give a linear hexaketide corresponding to the polyketide part of nectripenoids. The FAD-dependent monooxygenase ntnJ then performs an oxidative decarboxylation at C11 of the ntnH/ntnG product, via an electrophilic aromatic hydroxylation with concomitant ipso-decarboxylation. The membrane-bound polyprenyl transferase ntnF then introduces a farnesyl group before the FAD-dependent monooxygenase ntnK functions as the first epoxidase on terminal C12'-C13' olefin, followed by a second epoxidation on C7'-C8' catalyzed by ntnA. The terpene cyclase/mutase ntnI then initiates the sequential tricyclic ring formation through protonation of the terminal epoxide and catalyzes the regioselective and stereoselective 6/6/6-tricyclic ring formation. The cytochrome P450 monooxygenase ntnM may then hydroxylate C1'. This chain is Polyprenyl transferase ntnF, found in Nectria sp.